Consider the following 227-residue polypeptide: Endo-1,4-beta-xylanase 1 (227 aa).

An N-terminal signal peptide occupies residues 1-19; that stretch reads MVSLKSVLAAATAVSSAIA. Residues 37-225 enclose the GH11 domain; sequence QVTPNAEGWH…SSGESDIYVQ (189 aa). Glu121 functions as the Nucleophile in the catalytic mechanism. Glu212 serves as the catalytic Proton donor.

Belongs to the glycosyl hydrolase 11 (cellulase G) family.

It catalyses the reaction Endohydrolysis of (1-&gt;4)-beta-D-xylosidic linkages in xylans.. It participates in glycan degradation; xylan degradation. The sequence is that of Endo-1,4-beta-xylanase 1 from Humicola insolens (Soft-rot fungus).